Here is a 957-residue protein sequence, read N- to C-terminus: Mediator of RNA polymerase II transcription subunit 16 (957 aa).

The segment at 855-883 (YTEVDAAPSGKTNAQGPPQQPQPQQQRRR) is disordered.

It belongs to the Mediator complex subunit 16 family. As to quaternary structure, component of the Mediator complex.

It is found in the nucleus. Functionally, component of the Mediator complex, a coactivator involved in the regulated transcription of nearly all RNA polymerase II-dependent genes. Mediator functions as a bridge to convey information from gene-specific regulatory proteins to the basal RNA polymerase II transcription machinery. Mediator is recruited to promoters by direct interactions with regulatory proteins and serves as a scaffold for the assembly of a functional preinitiation complex with RNA polymerase II and the general transcription factors. The polypeptide is Mediator of RNA polymerase II transcription subunit 16 (sin4) (Aspergillus clavatus (strain ATCC 1007 / CBS 513.65 / DSM 816 / NCTC 3887 / NRRL 1 / QM 1276 / 107)).